Reading from the N-terminus, the 560-residue chain is Hemocyanin, units G and H (560 aa).

Cys-1 and Cys-11 form a disulfide bridge. The unit G stretch occupies residues 1 to 184 (CPTPDAPQYA…AKGLVSQHIE (184 aa)). Residues 12 to 14 (CLH) constitute a cross-link (2'-(S-cysteinyl)-histidine (Cys-His)). Cys-93 and Cys-98 form a disulfide bridge. Residue Asn-142 is glycosylated (N-linked (GlcNAc...) asparagine). Residues 185–560 (DHDTETLIRK…KPGTGTQLTR (376 aa)) are unit H. Residue His-230 participates in Cu cation binding. A disulfide bridge connects residues Cys-236 and Cys-246. A glycan (N-linked (GlcNAc...) asparagine) is linked at Asn-240. The segment at residues 247 to 249 (CQH) is a cross-link (2'-(S-cysteinyl)-histidine (Cys-His)). Residues His-249, His-258, His-358, His-362, and His-389 each contribute to the Cu cation site. Disulfide bonds link Cys-348–Cys-415 and Cys-476–Cys-482.

It belongs to the tyrosinase family. Hemocyanin subfamily. Decamers of large identical subunits (390 kDa), each containing 8 globular oxygen-binding functional units. It depends on Cu(2+) as a cofactor.

Functionally, hemocyanins are copper-containing oxygen carriers occurring freely dissolved in the hemolymph of many mollusks and arthropods. The chain is Hemocyanin, units G and H from Sepia officinalis (Common cuttlefish).